The chain runs to 337 residues: uncharacterized protein (337 aa).

An F-box domain is found at 12–60 (SLNYVDLPDTVHRKIFEYLNPWEIFKLSRISKAIHVTILKNKKFAVKDI).

This is an uncharacterized protein from Caenorhabditis elegans.